Reading from the N-terminus, the 313-residue chain is MNTFSQVWVFSDTPSRLPELMNGAQALANQINTFVLNDADGAQAIQLGANHVWKLNGKPDDRMIEDYAGVMADTIRQHGADGLVLLPNTRRGKLLAAKLGYRLKAAVSNDASTVSVQDGKATVKHMVYGGLAIGEERIATPYAVLTISSGTFDAAQPDASRTGETHTVEWQAPAVAITRTATQARQSNSVDLDKARLVVSVGRGIGSKENIALAEQLCKAIGAELACSRPVAENEKWMEHERYVGISNLMLKPELYLAVGISGQIQHMVGANASQTIFAINKDKNAPIFQYADYGIVGDAVKILPALTAALAR.

An FAD-binding site is contributed by 255 to 283; sequence LYLAVGISGQIQHMVGANASQTIFAINKD.

This sequence belongs to the ETF alpha-subunit/FixB family. In terms of assembly, heterodimer of FixA and FixB.

It participates in amine and polyamine metabolism; carnitine metabolism. Functionally, required for anaerobic carnitine reduction. May bring reductant to CaiA. This is Protein FixB from Escherichia coli (strain K12 / MC4100 / BW2952).